Consider the following 485-residue polypeptide: Glutamyl-tRNA(Gln) amidotransferase subunit A (485 aa).

Residues Lys-79 and Ser-154 each act as charge relay system in the active site. Catalysis depends on Ser-178, which acts as the Acyl-ester intermediate.

It belongs to the amidase family. GatA subfamily. As to quaternary structure, heterotrimer of A, B and C subunits.

The catalysed reaction is L-glutamyl-tRNA(Gln) + L-glutamine + ATP + H2O = L-glutaminyl-tRNA(Gln) + L-glutamate + ADP + phosphate + H(+). Allows the formation of correctly charged Gln-tRNA(Gln) through the transamidation of misacylated Glu-tRNA(Gln) in organisms which lack glutaminyl-tRNA synthetase. The reaction takes place in the presence of glutamine and ATP through an activated gamma-phospho-Glu-tRNA(Gln). The chain is Glutamyl-tRNA(Gln) amidotransferase subunit A from Staphylococcus aureus (strain Mu3 / ATCC 700698).